The following is a 599-amino-acid chain: uncharacterized protein (599 aa).

Positions 1-10 (MEQQSENVYF) are enriched in polar residues. The disordered stretch occupies residues 1-146 (MEQQSENVYF…EPSFTLTELP (146 aa)). Low complexity predominate over residues 11–20 (SGSESESLSD). Residues 24–44 (RAQPQNQNSDNSRSASLTPPD) are compositionally biased toward polar residues. Acidic residues-rich tracts occupy residues 46-56 (SDLEDYVDSDS) and 89-114 (NGSD…EEED). The segment covering 118 to 127 (RSSSRSAMDI) has biased composition (low complexity). The segment covering 128–138 (SSEEDSGDDEP) has biased composition (acidic residues).

Belongs to the IIV-6 229L family.

This is an uncharacterized protein from Aedes vexans (Inland floodwater mosquito).